The sequence spans 285 residues: MIRAKKHFGQNFLQDEAVLNKIIQAIPKDTQNIVEIGPGLGDLTFKILQICSVTAYEIDSELFALLGKKFAKEVQNGRLKLFCKDALEKWDEGGVSEQGYFLVANLPYYVATKMILSAIDDEKCRGLVVMIQREVALKFSAKSGESEFSSLAILANLQGSCELLFDVSAQCFNPPPKVVSSVIKIQKSKILLGESGIFKDKFEYEKFKIFLKIAFASPRKTLMKNLSAKFDKFELNTLFAELNLSPAIRPHELNVELYLKIFENLKEDNERQKRRKSGSLAGQEQ.

S-adenosyl-L-methionine-binding residues include Asn11, Leu13, Gly37, Glu57, Asp85, and Asn105.

Belongs to the class I-like SAM-binding methyltransferase superfamily. rRNA adenine N(6)-methyltransferase family. RsmA subfamily.

The protein localises to the cytoplasm. The enzyme catalyses adenosine(1518)/adenosine(1519) in 16S rRNA + 4 S-adenosyl-L-methionine = N(6)-dimethyladenosine(1518)/N(6)-dimethyladenosine(1519) in 16S rRNA + 4 S-adenosyl-L-homocysteine + 4 H(+). Functionally, specifically dimethylates two adjacent adenosines (A1518 and A1519) in the loop of a conserved hairpin near the 3'-end of 16S rRNA in the 30S particle. May play a critical role in biogenesis of 30S subunits. The polypeptide is Ribosomal RNA small subunit methyltransferase A (Campylobacter curvus (strain 525.92)).